A 181-amino-acid polypeptide reads, in one-letter code: Ribonuclease M5 (181 aa).

The Toprim domain occupies 3-86; it reads KEVIVVEGRD…AYISQEEGTK (84 aa). Residues Glu9, Asp55, and Asp57 each contribute to the Mg(2+) site.

This sequence belongs to the ribonuclease M5 family. Mg(2+) serves as cofactor.

The protein resides in the cytoplasm. The catalysed reaction is Endonucleolytic cleavage of RNA, removing 21 and 42 nucleotides, respectively, from the 5'- and 3'-termini of a 5S-rRNA precursor.. Required for correct processing of both the 5' and 3' ends of 5S rRNA precursor. Cleaves both sides of a double-stranded region yielding mature 5S rRNA in one step. This Clostridium botulinum (strain Hall / ATCC 3502 / NCTC 13319 / Type A) protein is Ribonuclease M5.